The chain runs to 180 residues: Shikimate kinase (180 aa).

Position 15-20 (15-20) interacts with ATP; it reads GAGKTT. Thr19 provides a ligand contact to Mg(2+). Positions 37, 61, and 83 each coordinate substrate. Arg121 provides a ligand contact to ATP. A substrate-binding site is contributed by Arg140.

It belongs to the shikimate kinase family. Monomer. The cofactor is Mg(2+).

The protein resides in the cytoplasm. The enzyme catalyses shikimate + ATP = 3-phosphoshikimate + ADP + H(+). It participates in metabolic intermediate biosynthesis; chorismate biosynthesis; chorismate from D-erythrose 4-phosphate and phosphoenolpyruvate: step 5/7. Its function is as follows. Catalyzes the specific phosphorylation of the 3-hydroxyl group of shikimic acid using ATP as a cosubstrate. The chain is Shikimate kinase from Psychrobacter sp. (strain PRwf-1).